Here is an 889-residue protein sequence, read N- to C-terminus: Low-affinity potassium transport protein (889 aa).

Residues 1–51 are Cytoplasmic-facing; sequence MPTAKRTSSRASLALPFQLRLVHKKSWGHRLRDFISGFLKSCRPIAKYVFP. Residues 52–73 traverse the membrane as a helical segment; it reads NFIVVHYIYLITLSIIGSILLY. Residues 74 to 80 lie on the Extracellular side of the membrane; it reads PCKNTAF. A helical transmembrane segment spans residues 81–101; it reads IDVLFLAAGASTQGGLATKST. The Cytoplasmic segment spans residues 102–109; it reads NDFNLYQQ. A helical transmembrane segment spans residues 110–130; the sequence is IVVYVITLLSTPILIHGFLAF. The Extracellular portion of the chain corresponds to 131-464; sequence VRLYWFERYF…EYRALRLLCC (334 aa). The tract at residues 189 to 244 is disordered; sequence REDPRQSASDVPMDSPDTSALSSISPLNVSSSKEESSDTQSSPPNFSSKRQPSDVD. Low complexity predominate over residues 207–219; the sequence is SALSSISPLNVSS. Residues Asn-216, Asn-233, and Asn-265 are each glycosylated (N-linked (GlcNAc...) asparagine). A helical transmembrane segment spans residues 465 to 487; the sequence is ILMVYYIGFNILAFVTIVPWACT. Residues 488 to 499 lie on the Cytoplasmic side of the membrane; sequence RHHYSEIIRRNG. Residues 500-521 traverse the membrane as a helical segment; the sequence is VSPTWWGFFTAMSAFSNLGLSL. The Extracellular portion of the chain corresponds to 522 to 524; sequence TAD. The chain crosses the membrane as a helical span at residues 525-545; sequence SMVSFDTAPYPLIFMMFFIII. Over 546-548 the chain is Cytoplasmic; sequence GNT. The helical transmembrane segment at 549–569 threads the bilayer; the sequence is GFPIMLRFIIWIMFKTSRDLS. The Extracellular segment spans residues 570 to 584; that stretch reads QFKESLGFLLDHPRR. The helical transmembrane segment at 585–605 threads the bilayer; it reads CFTLLFPSGPTWWLFTTLVVL. Topologically, residues 606 to 609 are cytoplasmic; that stretch reads NATD. Residues 610–630 form a helical membrane-spanning segment; sequence WILFIILDFNSAVVRQVAKGY. Over 631 to 657 the chain is Extracellular; sequence RALMGLFQSVCTRTAGFNVVDLSKLHP. The helical transmembrane segment at 658-678 threads the bilayer; sequence SIQVSYMLMMYVSVLPLAISI. Residues 679 to 743 are Cytoplasmic-facing; sequence RRTNVYEEQS…KSFVGAHLRR (65 aa). The tract at residues 705–733 is disordered; sequence DDIKETDHDGESEERDTVSTKSKPKKQSP. A helical transmembrane segment spans residues 744–764; sequence QLSFDLWYLFLGLFIICICEG. Topologically, residues 765 to 776 are extracellular; sequence RKIEDVNKPDFN. The chain crosses the membrane as a helical span at residues 777–797; it reads VFAILFEVVSAYGTVGLSLGY. Topologically, residues 798-889 are cytoplasmic; the sequence is PNTNTSLSAQ…KIATKFWGKH (92 aa).

It belongs to the TrkH potassium transport family.

It localises to the membrane. In terms of biological role, this protein is required for low-affinity potassium transport. This Saccharomyces cerevisiae (strain ATCC 204508 / S288c) (Baker's yeast) protein is Low-affinity potassium transport protein (TRK2).